We begin with the raw amino-acid sequence, 261 residues long: Cytosolic Fe-S cluster assembly factor Nubp2 homolog (261 aa).

14-21 (GKGGVGKS) provides a ligand contact to ATP. Residues C188 and C191 each contribute to the [4Fe-4S] cluster site.

Belongs to the Mrp/NBP35 ATP-binding proteins family. NUBP2/CFD1 subfamily. Heterotetramer of 2 Nubp1 and 2 Nubp2 chains. It depends on [4Fe-4S] cluster as a cofactor.

It localises to the cytoplasm. Functionally, component of the cytosolic iron-sulfur (Fe/S) protein assembly (CIA) machinery. Required for maturation of extramitochondrial Fe-S proteins. The Nubp1-Nubp2 heterotetramer forms a Fe-S scaffold complex, mediating the de novo assembly of an Fe-S cluster and its transfer to target apoproteins. The sequence is that of Cytosolic Fe-S cluster assembly factor Nubp2 homolog from Drosophila willistoni (Fruit fly).